A 449-amino-acid polypeptide reads, in one-letter code: Phosphoglucosamine mutase (449 aa).

S99 acts as the Phosphoserine intermediate in catalysis. Mg(2+) contacts are provided by S99, D239, D241, and D243. S99 bears the Phosphoserine mark.

The protein belongs to the phosphohexose mutase family. The cofactor is Mg(2+). Post-translationally, activated by phosphorylation.

The catalysed reaction is alpha-D-glucosamine 1-phosphate = D-glucosamine 6-phosphate. Functionally, catalyzes the conversion of glucosamine-6-phosphate to glucosamine-1-phosphate. This is Phosphoglucosamine mutase from Finegoldia magna (strain ATCC 29328 / DSM 20472 / WAL 2508) (Peptostreptococcus magnus).